Here is a 1293-residue protein sequence, read N- to C-terminus: Receptor-type tyrosine-protein phosphatase C (1293 aa).

A signal peptide spans 1–25; that stretch reads MTMGLWLKLLAFGFALLDTEVFVTG. Over 26-566 the chain is Extracellular; sequence QTPTPSDELS…RNESTNFNAK (541 aa). A disordered region spans residues 43–174; it reads LPQSDPLPAR…STTDISSGAS (132 aa). 3 stretches are compositionally biased toward polar residues: residues 53–72, 88–110, and 149–169; these read TTES…SETT, QPDS…QADN, and LARN…TTDI. Asn66 is a glycosylation site (N-linked (GlcNAc...) asparagine). Residues Asn152, Asn163, Asn209, Asn213, Asn220, Asn255, Asn260, Asn292, Asn313, Asn324, Asn349, Asn418, Asn429, Asn459, and Asn491 are each glycosylated (N-linked (GlcNAc...) asparagine). 2 consecutive Fibronectin type-III domains span residues 376-472 and 473-568; these read IPET…TKAD and RPDK…AKAL. A helical membrane pass occupies residues 567-588; it reads ALIIFLVFLIIVTSIALLVVLY. Residues 589-1293 are Cytoplasmic-facing; the sequence is KIYDLRKKRS…SASPAPTQSS (705 aa). 2 consecutive Tyrosine-protein phosphatase domains span residues 642–901 and 933–1216; these read FLAE…LVEY and LEAE…IASI. A Phosphotyrosine modification is found at Tyr672. Substrate-binding positions include Asp810, 842–848, and Gln886; that span reads CSAGVGR. Cys842 acts as the Phosphocysteine intermediate in catalysis. 7 positions are modified to phosphoserine: Ser964, Ser983, Ser986, Ser990, Ser993, Ser994, and Ser998. Residues 980–1003 form a disordered region; that stretch reads LEMSKESEPESDESSDDDSDSEET. A compositionally biased stretch (acidic residues) spans 988–1001; sequence PESDESSDDDSDSE. Cys1157 (phosphocysteine intermediate) is an active-site residue. The residue at position 1229 (Ser1229) is a Phosphoserine. The disordered stretch occupies residues 1240-1293; sequence DGGKQDANCVRPDGPLNKAQEDSRGVGTPEPTNSAEEPEHAANGSASPAPTQSS. Position 1267 is a phosphothreonine (Thr1267). Over residues 1283–1293 the composition is skewed to polar residues; that stretch reads GSASPAPTQSS. Residue Ser1286 is modified to Phosphoserine.

The protein belongs to the protein-tyrosine phosphatase family. Receptor class 1/6 subfamily. In terms of assembly, interacts with SKAP1. Interacts with DPP4; the interaction is enhanced in an interleukin-12-dependent manner in activated lymphocytes. Binds GANAB and PRKCSH. Interacts with CD53; this interaction stabilizes PTPRC on the membrane and is required for optimal phosphatase activity. Interacts with CLEC10A. Post-translationally, heavily N- and O-glycosylated.

It is found in the cell membrane. The protein resides in the membrane raft. It localises to the synapse. It catalyses the reaction O-phospho-L-tyrosyl-[protein] + H2O = L-tyrosyl-[protein] + phosphate. Functionally, protein tyrosine-protein phosphatase required for T-cell activation through the antigen receptor. Acts as a positive regulator of T-cell coactivation upon binding to DPP4. The first PTPase domain has enzymatic activity, while the second one seems to affect the substrate specificity of the first one. Upon T-cell activation, recruits and dephosphorylates SKAP1 and FYN. Dephosphorylates LYN, and thereby modulates LYN activity. Interacts with CLEC10A at antigen presenting cell-T cell contact; CLEC10A on immature dendritic cells recognizes Tn antigen-carrying PTPRC/CD45 receptor on effector T cells and modulates T cell activation threshold to limit autoreactivity. The protein is Receptor-type tyrosine-protein phosphatase C of Mus musculus (Mouse).